Consider the following 230-residue polypeptide: 5'-methylthioadenosine/S-adenosylhomocysteine nucleosidase (230 aa).

Glu-12 serves as the catalytic Proton acceptor. Substrate contacts are provided by residues Gly-78, Ile-153, and Met-174–Glu-175. Asp-198 (proton donor) is an active-site residue.

The protein belongs to the PNP/UDP phosphorylase family. MtnN subfamily.

It carries out the reaction S-adenosyl-L-homocysteine + H2O = S-(5-deoxy-D-ribos-5-yl)-L-homocysteine + adenine. It catalyses the reaction S-methyl-5'-thioadenosine + H2O = 5-(methylsulfanyl)-D-ribose + adenine. The enzyme catalyses 5'-deoxyadenosine + H2O = 5-deoxy-D-ribose + adenine. It functions in the pathway amino-acid biosynthesis; L-methionine biosynthesis via salvage pathway; S-methyl-5-thio-alpha-D-ribose 1-phosphate from S-methyl-5'-thioadenosine (hydrolase route): step 1/2. Functionally, catalyzes the irreversible cleavage of the glycosidic bond in both 5'-methylthioadenosine (MTA) and S-adenosylhomocysteine (SAH/AdoHcy) to adenine and the corresponding thioribose, 5'-methylthioribose and S-ribosylhomocysteine, respectively. Also cleaves 5'-deoxyadenosine, a toxic by-product of radical S-adenosylmethionine (SAM) enzymes, into 5-deoxyribose and adenine. This Shewanella denitrificans (strain OS217 / ATCC BAA-1090 / DSM 15013) protein is 5'-methylthioadenosine/S-adenosylhomocysteine nucleosidase.